Here is a 149-residue protein sequence, read N- to C-terminus: Nucleoside diphosphate kinase (149 aa).

ATP is bound by residues Lys9, Phe57, Arg85, Thr91, Arg102, and Asn112. The active-site Pros-phosphohistidine intermediate is the His115.

It belongs to the NDK family. In terms of assembly, homotetramer. It depends on Mg(2+) as a cofactor.

Its subcellular location is the cytoplasm. It carries out the reaction dZDP + ATP = dZTP + ADP. The enzyme catalyses a 2'-deoxyribonucleoside 5'-diphosphate + ATP = a 2'-deoxyribonucleoside 5'-triphosphate + ADP. The catalysed reaction is a ribonucleoside 5'-diphosphate + ATP = a ribonucleoside 5'-triphosphate + ADP. The protein operates within purine metabolism. Functionally, major role in the synthesis of nucleoside triphosphates other than ATP. The ATP gamma phosphate is transferred to the NDP beta phosphate via a ping-pong mechanism, using a phosphorylated active-site intermediate. In terms of biological role, (Microbial infection) Catalyzes the phosphorylation of dZDP to dZTP, when the bacterium is infected by a phage that produces the substrate for the synthesis of dZTP (2- amino-2'-deoxyadenosine 5'-triphosphate), which is then used by the phage as a DNA polymerase substrate. This is Nucleoside diphosphate kinase from Synechococcus elongatus (strain ATCC 33912 / PCC 7942 / FACHB-805) (Anacystis nidulans R2).